Reading from the N-terminus, the 305-residue chain is Probable xyloglucan endotransglucosylase/hydrolase protein 21 (305 aa).

A signal peptide spans 1–25; the sequence is MVSSTLLVMSISLFLGLSILLVVHG. The 191-residue stretch at 26-216 folds into the GH16 domain; that stretch reads KDFNQDIDIT…WSQGPFVASF (191 aa). N-linked (GlcNAc...) asparagine glycosylation occurs at asparagine 46. Glutamate 102 serves as the catalytic Nucleophile. Glutamate 106 functions as the Proton donor in the catalytic mechanism. Glutamate 106 contacts xyloglucan. Asparagine 110 carries an N-linked (GlcNAc...) asparagine glycan. Xyloglucan is bound by residues 119–121 and 129–131; these read HTN and DRE. Asparagine 146 is a glycosylation site (N-linked (GlcNAc...) asparagine). Residues 195–196 and glycine 200 contribute to the xyloglucan site; that span reads DW. N-linked (GlcNAc...) asparagine glycans are attached at residues asparagine 206 and asparagine 231. 2 disulfide bridges follow: cysteine 225/cysteine 239 and cysteine 282/cysteine 296. Over residues 236–253 the composition is skewed to low complexity; it reads TSPCSPGDSTSSSSSSTS. Positions 236–258 are disordered; the sequence is TSPCSPGDSTSSSSSSTSEWFSQ. Arginine 287 contributes to the xyloglucan binding site.

Belongs to the glycosyl hydrolase 16 family. XTH group 2 subfamily. In terms of processing, contains at least one intrachain disulfide bond essential for its enzymatic activity. In terms of tissue distribution, predominantly expressed in green siliques.

Its subcellular location is the secreted. The protein localises to the cell wall. The protein resides in the extracellular space. It is found in the apoplast. The enzyme catalyses breaks a beta-(1-&gt;4) bond in the backbone of a xyloglucan and transfers the xyloglucanyl segment on to O-4 of the non-reducing terminal glucose residue of an acceptor, which can be a xyloglucan or an oligosaccharide of xyloglucan.. Its function is as follows. Catalyzes xyloglucan endohydrolysis (XEH) and/or endotransglycosylation (XET). Cleaves and religates xyloglucan polymers, an essential constituent of the primary cell wall, and thereby participates in cell wall construction of growing tissues. This Arabidopsis thaliana (Mouse-ear cress) protein is Probable xyloglucan endotransglucosylase/hydrolase protein 21 (XTH21).